Consider the following 140-residue polypeptide: Putative membrane protein ORF7 (140 aa).

The helical transmembrane segment at 44-60 (TCAVSFFALFMLIIWVL) threads the bilayer. Positions 66-118 (PEGSTTRGTDAHTQTEGSTTRGTDAHTQTEGSRDQGSMTPEADDLTRPPLGHG) are disordered. The segment covering 68-103 (GSTTRGTDAHTQTEGSTTRGTDAHTQTEGSRDQGSM) has biased composition (polar residues).

The protein resides in the membrane. The chain is Putative membrane protein ORF7 (ORF7) from Ictalurid herpesvirus 1 (strain Auburn) (IcHV-1).